The chain runs to 262 residues: Ribosome-recycling factor, mitochondrial (262 aa).

A mitochondrion-targeting transit peptide spans 1–55 (MASGIRCFRLLHPAFRSYHAALTRPVSEVSMKTVSGRQHGHRQYSAYPAVPVRHF).

It belongs to the RRF family.

The protein resides in the mitochondrion. In terms of biological role, responsible for the disassembly of ribosomes from messenger RNA at the termination of mitochondrial protein biosynthesis. Acts in collaboration with GFM2. Promotes mitochondrial ribosome recycling by dissolution of intersubunit contacts. This Mus musculus (Mouse) protein is Ribosome-recycling factor, mitochondrial (Mrrf).